Here is a 200-residue protein sequence, read N- to C-terminus: Ras-related protein Rab-10 (200 aa).

Residues Ser-18, Gly-19, Val-20, Gly-21, Lys-22, Thr-23, Cys-24, Asn-35, Thr-36, Ser-40, and Thr-41 each contribute to the GTP site. Thr-23 is a Mg(2+) binding site. Short sequence motifs (switch) lie at residues 32–46 (DAFN…GIDF) and 64–81 (DTAG…YYRG). Residues Thr-41 and Asp-64 each contribute to the Mg(2+) site. Gly-67 contributes to the GTP binding site. Thr-73 is modified (phosphothreonine; by LRRK2). Position 102 is an N6-acetyllysine (Lys-102). Lys-102 participates in a covalent cross-link: Glycyl lysine isopeptide (Lys-Gly) (interchain with G-Cter in ubiquitin). 4 residues coordinate GTP: Asn-122, Lys-123, Asp-125, and Met-126. A Glycyl lysine isopeptide (Lys-Gly) (interchain with G-Cter in ubiquitin) cross-link involves residue Lys-136. Positions 152, 153, and 154 each coordinate GTP. Lys-154 is covalently cross-linked (Glycyl lysine isopeptide (Lys-Gly) (interchain with G-Cter in ubiquitin)). 2 S-geranylgeranyl cysteine lipidation sites follow: Cys-199 and Cys-200.

Belongs to the small GTPase superfamily. Rab family. In terms of assembly, interacts with MYO5A; mediates the transport to the plasma membrane of SLC2A4/GLUT4 storage vesicles. Interacts with GDI1 and with GDI2; negatively regulates RAB10 association with membranes and activation. Interacts (GDP-bound form) with LLGL1; the interaction is direct and promotes RAB10 association with membranes and activation through competition with the Rab inhibitor GDI1. Interacts with EXOC4; probably associates with the exocyst. Interacts (GTP-bound form) with MICALCL, MICAL1, MICAL3, EHBP1 and EHBP1L1; at least in case of MICAL1 two molecules of RAB10 can bind to one molecule of MICAL1. Interacts with TBC1D13. Interacts with SEC16A. Interacts with CHM and CHML. Interacts with LRRK2; interaction facilitates phosphorylation of Thr-73. Interacts (when phosphorylated on Thr-73) with RILPL1 and RILPL2. Interacts with TBC1D21. Interacts with MARCKS. Mg(2+) serves as cofactor. Post-translationally, ubiquitinated upon Legionella pneumophila infection. Ubiquitination does not lead to proteasomal degradation. In terms of processing, phosphorylation of Thr-73 in the switch II region by LRRK2 prevents the association of dRAB regulatory proteins, including CHM, CHML and RAB GDP dissociation inhibitors GDI1 and GDI2. Phosphorylation of Thr-73 by LRRK2 is stimulated by RAB29 and RAB32. Phosphorylation by LRRK2 is required for localization to stressed lysosomes. Expressed in the hippocampus. Expressed in neutrophils (at protein level). Expressed in the testis (at protein level).

The protein resides in the cytoplasmic vesicle membrane. It is found in the golgi apparatus membrane. Its subcellular location is the golgi apparatus. It localises to the trans-Golgi network membrane. The protein localises to the endosome membrane. The protein resides in the recycling endosome membrane. It is found in the cytoplasmic vesicle. Its subcellular location is the phagosome membrane. It localises to the cytoplasm. The protein localises to the cytoskeleton. The protein resides in the cilium basal body. It is found in the endoplasmic reticulum membrane. Its subcellular location is the perinuclear region. It localises to the lysosome. The enzyme catalyses GTP + H2O = GDP + phosphate + H(+). Its activity is regulated as follows. Regulated by guanine nucleotide exchange factors (GEFs) DENND4C and RABIF which promote the exchange of bound GDP for free GTP. Regulated by GTPase activating proteins (GAPs) including TBC1D21 which increase the GTP hydrolysis activity. Inhibited by GDP dissociation inhibitors GDI1 and GDI2 which prevent Rab-GDP dissociation. Its function is as follows. The small GTPases Rab are key regulators of intracellular membrane trafficking, from the formation of transport vesicles to their fusion with membranes. Rabs cycle between an inactive GDP-bound form and an active GTP-bound form that is able to recruit to membranes different set of downstream effectors directly responsible for vesicle formation, movement, tethering and fusion. That Rab is mainly involved in the biosynthetic transport of proteins from the Golgi to the plasma membrane. Regulates, for instance, SLC2A4/GLUT4 glucose transporter-enriched vesicles delivery to the plasma membrane. In parallel, it regulates the transport of TLR4, a toll-like receptor to the plasma membrane and therefore may be important for innate immune response. Also plays a specific role in asymmetric protein transport to the plasma membrane. In neurons, it is involved in axonogenesis through regulation of vesicular membrane trafficking toward the axonal plasma membrane. In epithelial cells, it regulates transport from the Golgi to the basolateral membrane. May play a role in the basolateral recycling pathway and in phagosome maturation. May play a role in endoplasmic reticulum dynamics and morphology controlling tubulation along microtubules and tubules fusion. Together with LRRK2, RAB8A, and RILPL1, it regulates ciliogenesis. When phosphorylated by LRRK2 on Thr-73, binds RILPL1 and inhibits ciliogenesis. Participates in the export of a subset of neosynthesized proteins through a Rab8-Rab10-Rab11-dependent endososomal export route. Targeted to and stabilized on stressed lysosomes through LRRK2 phosphorylation where it promotes the extracellular release of lysosomal content through EHBP1 and EHNP1L1 effector proteins. Functionally, (Microbial infection) Upon Legionella pneumophila infection promotes endoplasmic reticulum recruitment and bacterial replication. Plays a role in remodeling the Legionella-containing vacuole (LCV) into an endoplasmic reticulum-like vacuole. This is Ras-related protein Rab-10 from Homo sapiens (Human).